The chain runs to 120 residues: Basic phospholipase A2 Cc2-PLA2 (120 aa).

7 cysteine pairs are disulfide-bonded: Cys26-Cys113, Cys28-Cys44, Cys43-Cys95, Cys49-Cys120, Cys50-Cys88, Cys57-Cys81, and Cys75-Cys86. Residues Tyr27, Gly29, and Gly31 each contribute to the Ca(2+) site. His47 is a catalytic residue. Residue Asp48 participates in Ca(2+) binding. Asp89 is an active-site residue.

It belongs to the phospholipase A2 family. Group II subfamily. D49 sub-subfamily. As to quaternary structure, monomer. It depends on Ca(2+) as a cofactor. Expressed by the venom gland.

It localises to the secreted. It catalyses the reaction a 1,2-diacyl-sn-glycero-3-phosphocholine + H2O = a 1-acyl-sn-glycero-3-phosphocholine + a fatty acid + H(+). Its function is as follows. Basic phospholipase A2 that inhibits ADP-, thrombin- and arachidonic acid-induced platelet aggregation. It also exhibits anticoagulant effects upon human plasma in vitro. It induces a high hemolytic activity reaching its maximum after 24 hours. It induces a marked elevation of plasmatic levels of interleukin-6 and -10, eosinophil peroxidase and complement lytic activities and it also provokes a drastic increase of lymphocytes, monocytes and neutrophils in peripheral blood accompanied by a rapid intense migration of neutrophils to the peritoneal cavity. PLA2 catalyzes the calcium-dependent hydrolysis of the 2-acyl groups in 3-sn-phosphoglycerides. The sequence is that of Basic phospholipase A2 Cc2-PLA2 from Cerastes cerastes (Horned desert viper).